An 841-amino-acid chain; its full sequence is DNA ligase (841 aa).

NAD(+)-binding positions include 54 to 58 (DAEYD), 103 to 104 (SL), and Glu-143. Catalysis depends on Lys-145, which acts as the N6-AMP-lysine intermediate. Arg-166, Glu-203, Lys-321, and Lys-345 together coordinate NAD(+). Positions 471, 474, 489, and 495 each coordinate Zn(2+). The interval 554–575 (KTVAESDQMPSEGSSVGASGKH) is disordered. Positions 561 to 570 (QMPSEGSSVG) are enriched in polar residues. One can recognise a BRCT domain in the interval 764–841 (GINKAVAGKT…SEAELLTLLG (78 aa)).

Belongs to the NAD-dependent DNA ligase family. LigA subfamily. Requires Mg(2+) as cofactor. It depends on Mn(2+) as a cofactor.

It carries out the reaction NAD(+) + (deoxyribonucleotide)n-3'-hydroxyl + 5'-phospho-(deoxyribonucleotide)m = (deoxyribonucleotide)n+m + AMP + beta-nicotinamide D-nucleotide.. In terms of biological role, DNA ligase that catalyzes the formation of phosphodiester linkages between 5'-phosphoryl and 3'-hydroxyl groups in double-stranded DNA using NAD as a coenzyme and as the energy source for the reaction. It is essential for DNA replication and repair of damaged DNA. This Neisseria meningitidis serogroup C / serotype 2a (strain ATCC 700532 / DSM 15464 / FAM18) protein is DNA ligase.